We begin with the raw amino-acid sequence, 187 residues long: Chromophore lyase CpcS/CpeS 2 (187 aa).

This sequence belongs to the CpcS/CpeS biliprotein lyase family.

Covalently attaches a chromophore to Cys residue(s) of phycobiliproteins. In Synechococcus sp. (strain JA-3-3Ab) (Cyanobacteria bacterium Yellowstone A-Prime), this protein is Chromophore lyase CpcS/CpeS 2.